The sequence spans 78 residues: Beta-defensin 105A (78 aa).

Residues 1-27 (MALIRKTFYFLFAVFFILVQLPSGCQA) form the signal peptide. Intrachain disulfides connect cysteine 46–cysteine 74, cysteine 53–cysteine 67, and cysteine 57–cysteine 73.

This sequence belongs to the beta-defensin family.

It localises to the secreted. In terms of biological role, has antimicrobial activity. This chain is Beta-defensin 105A (DEFB105A), found in Hylobates lar (Lar gibbon).